Here is a 207-residue protein sequence, read N- to C-terminus: 8-oxoguanine DNA glycosylase/AP lyase (207 aa).

Residues lysine 128 and aspartate 146 contribute to the active site.

It belongs to the type-2 OGG1 family.

It carries out the reaction 2'-deoxyribonucleotide-(2'-deoxyribose 5'-phosphate)-2'-deoxyribonucleotide-DNA = a 3'-end 2'-deoxyribonucleotide-(2,3-dehydro-2,3-deoxyribose 5'-phosphate)-DNA + a 5'-end 5'-phospho-2'-deoxyribonucleoside-DNA + H(+). Catalyzes the excision of an oxidatively damaged form of guanine (7,8-dihydro-8-oxoguanine = 8-oxoG) from DNA. Also cleaves the DNA backbone at apurinic/apyrimidinic sites (AP sites). This Saccharolobus islandicus (strain L.S.2.15 / Lassen #1) (Sulfolobus islandicus) protein is 8-oxoguanine DNA glycosylase/AP lyase.